Consider the following 395-residue polypeptide: Phosphopentomutase (395 aa).

6 residues coordinate Mn(2+): Asp-14, Asp-286, His-291, Asp-327, His-328, and His-339.

Belongs to the phosphopentomutase family. Mn(2+) serves as cofactor.

The protein localises to the cytoplasm. The catalysed reaction is 2-deoxy-alpha-D-ribose 1-phosphate = 2-deoxy-D-ribose 5-phosphate. The enzyme catalyses alpha-D-ribose 1-phosphate = D-ribose 5-phosphate. It participates in carbohydrate degradation; 2-deoxy-D-ribose 1-phosphate degradation; D-glyceraldehyde 3-phosphate and acetaldehyde from 2-deoxy-alpha-D-ribose 1-phosphate: step 1/2. Isomerase that catalyzes the conversion of deoxy-ribose 1-phosphate (dRib-1-P) and ribose 1-phosphate (Rib-1-P) to deoxy-ribose 5-phosphate (dRib-5-P) and ribose 5-phosphate (Rib-5-P), respectively. This Staphylococcus saprophyticus subsp. saprophyticus (strain ATCC 15305 / DSM 20229 / NCIMB 8711 / NCTC 7292 / S-41) protein is Phosphopentomutase.